The primary structure comprises 34 residues: Photosystem II reaction center protein M (34 aa).

The chain crosses the membrane as a helical span at residues 5-25 (ILAFIATALFILIPTAFLLIL).

Belongs to the PsbM family. In terms of assembly, PSII is composed of 1 copy each of membrane proteins PsbA, PsbB, PsbC, PsbD, PsbE, PsbF, PsbH, PsbI, PsbJ, PsbK, PsbL, PsbM, PsbT, PsbX, PsbY, PsbZ, Psb30/Ycf12, at least 3 peripheral proteins of the oxygen-evolving complex and a large number of cofactors. It forms dimeric complexes.

It localises to the plastid. It is found in the chloroplast thylakoid membrane. Functionally, one of the components of the core complex of photosystem II (PSII). PSII is a light-driven water:plastoquinone oxidoreductase that uses light energy to abstract electrons from H(2)O, generating O(2) and a proton gradient subsequently used for ATP formation. It consists of a core antenna complex that captures photons, and an electron transfer chain that converts photonic excitation into a charge separation. This subunit is found at the monomer-monomer interface. The chain is Photosystem II reaction center protein M from Angiopteris evecta (Mule's foot fern).